Reading from the N-terminus, the 937-residue chain is Inactive tyrosine-protein kinase transmembrane receptor ROR1 (937 aa).

An N-terminal signal peptide occupies residues 1-29; that stretch reads MHRPRRRGTRPPPLALLAALLLAARGADA. The Extracellular segment spans residues 30–406; that stretch reads QETELSVSAE…KEKNKMEILY (377 aa). The Ig-like C2-type domain maps to 42 to 141; sequence PTSSWNTSSE…VATNGKKVVS (100 aa). N-linked (GlcNAc...) asparagine glycans are attached at residues Asn47 and Asn66. 9 cysteine pairs are disulfide-bonded: Cys79-Cys131, Cys170-Cys235, Cys178-Cys228, Cys219-Cys260, Cys248-Cys296, Cys252-Cys282, Cys313-Cys391, Cys334-Cys374, and Cys362-Cys386. One can recognise an FZ domain in the interval 165–299; sequence EEDGFCQPYR…SPEAANCIRI (135 aa). Asn184 carries N-linked (GlcNAc...) asparagine glycosylation. In terms of domain architecture, Kringle spans 312 to 391; the sequence is KCYNSTGVDY…KSDLCDIPAC (80 aa). A glycan (N-linked (GlcNAc...) asparagine) is linked at Asn315. A helical transmembrane segment spans residues 407–427; the sequence is ILVPSVAIPLAIAFLFFFICV. Residues 428–937 are Cytoplasmic-facing; it reads CRNNQKSSSP…HTESMISAEV (510 aa). A Protein kinase domain is found at 473-746; sequence VRFMEELGEC…PRFKDIHVRL (274 aa). Residues 479 to 487 and Lys506 each bind ATP; that span reads LGECTFGKI. A Phosphotyrosine; by autocatalysis modification is found at Tyr645. Residues 753-762 show a composition bias toward low complexity; sequence SSHTSSTTPS. Disordered regions lie at residues 753–778, 840–890, and 916–937; these read SSHT…ASPV, GPPR…HMSI, and QSSL…SAEV. Polar residues predominate over residues 763–778; it reads GGNATTQTTSLSASPV. Positions 854–864 are enriched in low complexity; it reads RSPSSASGSTS. Polar residues predominate over residues 865–880; sequence TGHVASLPSSGSNQEA.

This sequence belongs to the protein kinase superfamily. Tyr protein kinase family. ROR subfamily. Interacts with ERBB2 and IGFBP5. In terms of tissue distribution, at postnatal P0, expressed in heart, lung, liver, kidney, spleen and inner ear.

It is found in the membrane. It localises to the cell projection. The protein localises to the axon. Has very low kinase activity in vitro and is unlikely to function as a tyrosine kinase in vivo. Receptor for ligand WNT5A which activate downstream NFkB signaling pathway and may result in the inhibition of WNT3A-mediated signaling. In inner ear, crucial for spiral ganglion neurons to innervate auditory hair cells. Via IGFBP5 ligand, forms a complex with ERBB2 to enhance CREB oncogenic signaling. The chain is Inactive tyrosine-protein kinase transmembrane receptor ROR1 (Ror1) from Mus musculus (Mouse).